Consider the following 226-residue polypeptide: Probable peroxiredoxin prdx-3 (226 aa).

The region spanning 33–191 (LGPKNTVPAF…TLRVLKAFQF (159 aa)) is the Thioredoxin domain. Cys-78 (cysteine sulfenic acid (-SOH) intermediate) is an active-site residue.

It belongs to the peroxiredoxin family. AhpC/Prx1 subfamily. In terms of assembly, homodimer; disulfide-linked, upon oxidation.

It carries out the reaction a hydroperoxide + [thioredoxin]-dithiol = an alcohol + [thioredoxin]-disulfide + H2O. In terms of biological role, thiol-specific peroxidase that catalyzes the reduction of hydrogen peroxide and organic hydroperoxides to water and alcohols, respectively. Plays a role in cell protection against oxidative stress by detoxifying peroxides and as sensor of hydrogen peroxide-mediated signaling events. The chain is Probable peroxiredoxin prdx-3 (prdx-3) from Caenorhabditis elegans.